We begin with the raw amino-acid sequence, 553 residues long: Arginine--tRNA ligase (553 aa).

Residues 130-140 (ANPTGDLHIGH) carry the 'HIGH' region motif.

The protein belongs to the class-I aminoacyl-tRNA synthetase family. In terms of assembly, monomer.

The protein localises to the cytoplasm. The catalysed reaction is tRNA(Arg) + L-arginine + ATP = L-arginyl-tRNA(Arg) + AMP + diphosphate. In Staphylococcus aureus (strain MRSA252), this protein is Arginine--tRNA ligase.